The primary structure comprises 446 residues: Plant intracellular Ras-group-related LRR protein 3 (446 aa).

Residues Glu65 to Glu100 adopt a coiled-coil conformation. Positions Gly101–Asp121 are disordered. 10 LRR repeats span residues Gly138 to Arg160, Ile161 to Leu184, Asp185 to Leu207, Leu208 to Cys230, Ser232 to Leu254, Val255 to Met277, Ser279 to Leu300, Ser301 to Asp324, Leu325 to Arg347, and Asp349 to Lys371. The GVYW motif lies at Gly372 to Trp384.

This sequence belongs to the SHOC2 family. As to expression, widely expressed.

Functionally, leucine-rich repeat protein that likely mediates protein interactions, possibly in the context of signal transduction. This chain is Plant intracellular Ras-group-related LRR protein 3 (IRL3), found in Oryza sativa subsp. japonica (Rice).